Reading from the N-terminus, the 1796-residue chain is Y' element ATP-dependent helicase protein 1 copy 5 (1796 aa).

Residues 743–767 are disordered; it reads AGEAASSDHDQKISRVTRKRPREPK. Residues 797-974 form the Helicase ATP-binding domain; it reads EIYMADTPSV…LQRIGLTGLA (178 aa). 810–817 provides a ligand contact to ATP; the sequence is APPGYGKT. A Helicase C-terminal domain is found at 1031-1180; the sequence is KLLLALFEIE…EFYGLESKKG (150 aa). Disordered regions lie at residues 1254-1278 and 1294-1421; these read ANAS…NVRT and TTES…DINK. Low complexity predominate over residues 1294-1397; the sequence is TTESTNSSTN…ATTTESTNAS (104 aa). Residues 1398-1421 are compositionally biased toward basic and acidic residues; that stretch reads AKEDANKDGNAEDNRFHPVTDINK.

Belongs to the helicase family. Yeast subtelomeric Y' repeat subfamily.

Catalyzes DNA unwinding and is involved in telomerase-independent telomere maintenance. This is Y' element ATP-dependent helicase protein 1 copy 5 (YRF1-5) from Saccharomyces cerevisiae (strain ATCC 204508 / S288c) (Baker's yeast).